We begin with the raw amino-acid sequence, 306 residues long: Elongation factor Ts (306 aa).

The involved in Mg(2+) ion dislocation from EF-Tu stretch occupies residues 80 to 83 (TDFV).

This sequence belongs to the EF-Ts family.

The protein resides in the cytoplasm. Associates with the EF-Tu.GDP complex and induces the exchange of GDP to GTP. It remains bound to the aminoacyl-tRNA.EF-Tu.GTP complex up to the GTP hydrolysis stage on the ribosome. This Leptothrix cholodnii (strain ATCC 51168 / LMG 8142 / SP-6) (Leptothrix discophora (strain SP-6)) protein is Elongation factor Ts.